A 473-amino-acid polypeptide reads, in one-letter code: Siroheme synthase (473 aa).

The segment at 1 to 203 is precorrin-2 dehydrogenase /sirohydrochlorin ferrochelatase; sequence MNYLPIFIDL…GNKEQAINVL (203 aa). NAD(+) contacts are provided by residues 22–23 and 43–44; these read EV and KE. A Phosphoserine modification is found at S128. Positions 215–473 are uroporphyrinogen-III C-methyltransferase; it reads GEIILVGAGP…KNKFSTLTFI (259 aa). An S-adenosyl-L-methionine-binding site is contributed by P224. Catalysis depends on D247, which acts as the Proton acceptor. The active-site Proton donor is the K269. Residues 300–302, I305, M382, and G411 contribute to the S-adenosyl-L-methionine site; that span reads GGD.

The protein in the N-terminal section; belongs to the precorrin-2 dehydrogenase / sirohydrochlorin ferrochelatase family. In the C-terminal section; belongs to the precorrin methyltransferase family.

The enzyme catalyses uroporphyrinogen III + 2 S-adenosyl-L-methionine = precorrin-2 + 2 S-adenosyl-L-homocysteine + H(+). It catalyses the reaction precorrin-2 + NAD(+) = sirohydrochlorin + NADH + 2 H(+). The catalysed reaction is siroheme + 2 H(+) = sirohydrochlorin + Fe(2+). Its pathway is cofactor biosynthesis; adenosylcobalamin biosynthesis; precorrin-2 from uroporphyrinogen III: step 1/1. The protein operates within cofactor biosynthesis; adenosylcobalamin biosynthesis; sirohydrochlorin from precorrin-2: step 1/1. It participates in porphyrin-containing compound metabolism; siroheme biosynthesis; precorrin-2 from uroporphyrinogen III: step 1/1. It functions in the pathway porphyrin-containing compound metabolism; siroheme biosynthesis; siroheme from sirohydrochlorin: step 1/1. Its pathway is porphyrin-containing compound metabolism; siroheme biosynthesis; sirohydrochlorin from precorrin-2: step 1/1. Its function is as follows. Multifunctional enzyme that catalyzes the SAM-dependent methylations of uroporphyrinogen III at position C-2 and C-7 to form precorrin-2 via precorrin-1. Then it catalyzes the NAD-dependent ring dehydrogenation of precorrin-2 to yield sirohydrochlorin. Finally, it catalyzes the ferrochelation of sirohydrochlorin to yield siroheme. This Buchnera aphidicola subsp. Acyrthosiphon pisum (strain APS) (Acyrthosiphon pisum symbiotic bacterium) protein is Siroheme synthase.